A 201-amino-acid chain; its full sequence is Large ribosomal subunit protein uL4 (201 aa).

A disordered region spans residues 44 to 71; sequence RAQKTRAEVTGSGKKPWRQKGTGRARSG.

The protein belongs to the universal ribosomal protein uL4 family. As to quaternary structure, part of the 50S ribosomal subunit.

Functionally, one of the primary rRNA binding proteins, this protein initially binds near the 5'-end of the 23S rRNA. It is important during the early stages of 50S assembly. It makes multiple contacts with different domains of the 23S rRNA in the assembled 50S subunit and ribosome. Forms part of the polypeptide exit tunnel. The chain is Large ribosomal subunit protein uL4 from Escherichia fergusonii (strain ATCC 35469 / DSM 13698 / CCUG 18766 / IAM 14443 / JCM 21226 / LMG 7866 / NBRC 102419 / NCTC 12128 / CDC 0568-73).